Reading from the N-terminus, the 382-residue chain is 26S proteasome non-ATPase regulatory subunit 6 (382 aa).

In terms of domain architecture, PCI spans 186 to 354 (QFKEASDLYL…GVIETTRSDA (169 aa)).

The protein belongs to the proteasome subunit S10 family.

In terms of biological role, acts as a regulatory subunit of the 26S proteasome which is involved in the ATP-dependent degradation of ubiquitinated proteins. This is 26S proteasome non-ATPase regulatory subunit 6 (psmD6) from Dictyostelium discoideum (Social amoeba).